The sequence spans 388 residues: Succinate--CoA ligase [ADP-forming] subunit beta (388 aa).

The ATP-grasp domain occupies 9–244; it reads KEIFRSMGVA…LEEEDPKEIE (236 aa). ATP is bound by residues Lys46, 53-55, Glu99, Cys102, and Glu107; that span reads GRG. 2 residues coordinate Mg(2+): Asn199 and Asp213. Residues Asn264 and 321 to 323 each bind substrate; that span reads GIM.

The protein belongs to the succinate/malate CoA ligase beta subunit family. In terms of assembly, heterotetramer of two alpha and two beta subunits. The cofactor is Mg(2+).

The enzyme catalyses succinate + ATP + CoA = succinyl-CoA + ADP + phosphate. The catalysed reaction is GTP + succinate + CoA = succinyl-CoA + GDP + phosphate. The protein operates within carbohydrate metabolism; tricarboxylic acid cycle; succinate from succinyl-CoA (ligase route): step 1/1. In terms of biological role, succinyl-CoA synthetase functions in the citric acid cycle (TCA), coupling the hydrolysis of succinyl-CoA to the synthesis of either ATP or GTP and thus represents the only step of substrate-level phosphorylation in the TCA. The beta subunit provides nucleotide specificity of the enzyme and binds the substrate succinate, while the binding sites for coenzyme A and phosphate are found in the alpha subunit. This is Succinate--CoA ligase [ADP-forming] subunit beta from Staphylococcus epidermidis (strain ATCC 35984 / DSM 28319 / BCRC 17069 / CCUG 31568 / BM 3577 / RP62A).